The following is a 179-amino-acid chain: B-cell acute lymphoblastic leukemia-expressed protein (179 aa).

2 disordered regions span residues 1–20 and 65–86; these read MMKD…TDLQ and RDTP…RGKA. Polar residues predominate over residues 10–20; that stretch reads SWASEESTDLQ.

The polypeptide is B-cell acute lymphoblastic leukemia-expressed protein (BLACE) (Homo sapiens (Human)).